The primary structure comprises 493 residues: Alpha-amylase-related protein (493 aa).

Positions 1 to 19 are cleaved as a signal peptide; the sequence is MFKFALTLTLCLAGSLSLA. Gln-20 bears the Pyrrolidone carboxylic acid mark. The cysteines at positions 47 and 103 are disulfide-linked. Residues Asn-117, Gln-168, and Asp-177 each contribute to the Ca(2+) site. Cys-156 and Cys-170 are joined by a disulfide. A chloride-binding site is contributed by Arg-205. Asp-207 functions as the Nucleophile in the catalytic mechanism. His-211 contributes to the Ca(2+) binding site. The active-site Proton donor is the Glu-244. Chloride is bound by residues Asn-307 and Arg-342. Disulfide bonds link Cys-375-Cys-381, Cys-417-Cys-440, and Cys-447-Cys-459.

Belongs to the glycosyl hydrolase 13 family. In terms of assembly, monomer. Requires Ca(2+) as cofactor. Chloride is required as a cofactor.

Its subcellular location is the secreted. The enzyme catalyses Endohydrolysis of (1-&gt;4)-alpha-D-glucosidic linkages in polysaccharides containing three or more (1-&gt;4)-alpha-linked D-glucose units.. This Drosophila simulans (Fruit fly) protein is Alpha-amylase-related protein (Amyrel).